Reading from the N-terminus, the 192-residue chain is dTTP/UTP pyrophosphatase (192 aa).

Residue Asp-70 is the Proton acceptor of the active site.

Belongs to the Maf family. YhdE subfamily. A divalent metal cation is required as a cofactor.

It is found in the cytoplasm. It catalyses the reaction dTTP + H2O = dTMP + diphosphate + H(+). The enzyme catalyses UTP + H2O = UMP + diphosphate + H(+). Its function is as follows. Nucleoside triphosphate pyrophosphatase that hydrolyzes dTTP and UTP. May have a dual role in cell division arrest and in preventing the incorporation of modified nucleotides into cellular nucleic acids. This Clostridium perfringens (strain ATCC 13124 / DSM 756 / JCM 1290 / NCIMB 6125 / NCTC 8237 / Type A) protein is dTTP/UTP pyrophosphatase.